A 153-amino-acid polypeptide reads, in one-letter code: Transcriptional repressor NrdR (153 aa).

The segment at Cys3 to Cys34 is a zinc-finger region. In terms of domain architecture, ATP-cone spans Pro49–Gln139.

It belongs to the NrdR family. Zn(2+) serves as cofactor.

Functionally, negatively regulates transcription of bacterial ribonucleotide reductase nrd genes and operons by binding to NrdR-boxes. The polypeptide is Transcriptional repressor NrdR (Sorangium cellulosum (strain So ce56) (Polyangium cellulosum (strain So ce56))).